Here is a 143-residue protein sequence, read N- to C-terminus: MRFSQDDEVLIKEAWGLLHQIPNAGGEALARMFSCYPGTKSYFPHFGHDFSANNEKVKHHGKKVVDAIGQGVQHLHDLSSCLHTLSEKHARELMVDPCNFQYLIEAIMTTIAAHYGEKFTPEINCAAEKCLGQIVHVLISLYR.

The region spanning 2–143 (RFSQDDEVLI…IVHVLISLYR (142 aa)) is the Globin domain. Histidine 60 provides a ligand contact to O2. Position 89 (histidine 89) interacts with heme b.

This sequence belongs to the globin family. Heterotetramer of two alpha chains and two beta chains. As to expression, red blood cells.

Functionally, involved in oxygen transport from the lung to the various peripheral tissues. The protein is Hemoglobin subunit alpha (HBA) of Lepidosiren paradoxus (South American lungfish).